Consider the following 427-residue polypeptide: MFCYQCEQTAGGSGCTRVGVCGKNEDIASLQDTIIIGLKGIAAYAYHAGELGARDPEVDAFMHEALFTTLTNVDFDLNRHIETALKVGAMNLRVMELLDRAHVERFGAPEPTKVSTGTKAGPGILVTGHDLLDLYELLRQTEGTGINVYTHGEMLPAHAYPELKKFPHLVGNYGSAWQNQKKEFEDFPGAILGTTNCVLIPKESYRERMFTCGIAGLPGVTHIKNRDFTPVIEKAKSLPPLEEKAGGELTTGFHHQAVLKLAGQIIDAVKAGKIRHFFLVGGCDGAKPGRNYYTEFVEKVPKDCVVLTLGCGKYRFNHLDLGDIDGIPRLLDMGQCNNAYSALQVALALADAFKCSVNELPLSLVLSWFEQKAVAILLTLLHLGVRNIRIGPSLPAFLTPGVLKVLQEKYNLKPITTPEQDLKEILG.

[4Fe-4S] cluster-binding residues include C3, C6, C15, and C21. Residues H129, E153, C197, C283, C311, C336, E370, and K372 each contribute to the hybrid [4Fe-2O-2S] cluster site. A Cysteine persulfide modification is found at C283.

Belongs to the HCP family. It depends on [4Fe-4S] cluster as a cofactor. Hybrid [4Fe-2O-2S] cluster serves as cofactor.

It is found in the cytoplasm. It carries out the reaction A + NH4(+) + H2O = hydroxylamine + AH2 + H(+). Catalyzes the reduction of hydroxylamine to form NH(3) and H(2)O. The sequence is that of Hydroxylamine reductase from Moorella thermoacetica (strain ATCC 39073 / JCM 9320).